A 311-amino-acid chain; its full sequence is Prohibitin-2 (311 aa).

Residues 39 to 57 form a helical membrane-spanning segment; the sequence is GAGMGLAGLVLLGGAAFVA. An AIM motif is present at residues 141 to 144; sequence YRTL.

The protein belongs to the prohibitin family. As to quaternary structure, the mitochondrial prohibitin complex consists of two subunits (PHB1 and PHB2). The subunits assemble into a membrane-associated ring-shaped supercomplex of approximately 1 mDa. Interacts with ATG24/SNX4; the interaction is direct and plays a role in mitophagy.

It is found in the mitochondrion inner membrane. In terms of biological role, prohibitin probably acts as a holdase/unfoldase for the stabilization of newly synthesized mitochondrial proteins. Involved in mitophagy. Required for the switch to necrotrophic growth. This chain is Prohibitin-2, found in Colletotrichum higginsianum (strain IMI 349063) (Crucifer anthracnose fungus).